The primary structure comprises 492 residues: Catalase isozyme 2 (492 aa).

Active-site residues include His-65 and Asn-138. Tyr-348 provides a ligand contact to heme.

The protein belongs to the catalase family. As to quaternary structure, homotetramer. The cofactor is heme.

It is found in the peroxisome. The enzyme catalyses 2 H2O2 = O2 + 2 H2O. Its function is as follows. Occurs in almost all aerobically respiring organisms and serves to protect cells from the toxic effects of hydrogen peroxide. In Solanum lycopersicum (Tomato), this protein is Catalase isozyme 2 (CAT2).